We begin with the raw amino-acid sequence, 324 residues long: Alkanal monooxygenase beta chain (324 aa).

This sequence belongs to the bacterial luciferase oxidoreductase family. As to quaternary structure, heterodimer of an alpha and a beta chain.

It catalyses the reaction a long-chain fatty aldehyde + FMNH2 + O2 = a long-chain fatty acid + hnu + FMN + H2O + 2 H(+). Its function is as follows. Light-emitting reaction in luminous bacteria. The specific role of the beta subunit is unknown, but it is absolutely required for bioluminescence activity. This Vibrio harveyi (Beneckea harveyi) protein is Alkanal monooxygenase beta chain (luxB).